The sequence spans 126 residues: Probable V-type proton ATPase subunit G (126 aa).

Belongs to the V-ATPase G subunit family. In terms of assembly, V-ATPase is a heteromultimeric enzyme made up of two complexes: the ATP-hydrolytic V1 complex and the proton translocation V0 complex. The V1 complex consists of three catalytic AB heterodimers that form a heterohexamer, three peripheral stalks each consisting of EG heterodimers, one central rotor including subunits D and F, and the regulatory subunits C and H. The proton translocation complex V0 consists of the proton transport subunit a, a ring of proteolipid subunits c9c'', rotary subunit d, subunits e and f, and the accessory subunits vah-19/Ac45 and vah-20/PRR. Interacts with ced-1.

Its function is as follows. Subunit of the V1 complex of vacuolar(H+)-ATPase (V-ATPase), a multisubunit enzyme composed of a peripheral complex (V1) that hydrolyzes ATP and a membrane integral complex (V0) that translocates protons. V-ATPase is responsible for acidifying and maintaining the pH of intracellular compartments and in some cell types, is targeted to the plasma membrane, where it is responsible for acidifying the extracellular environment. In neurons, required for necrotic cell death by promoting intracellular acidification. The sequence is that of Probable V-type proton ATPase subunit G from Caenorhabditis elegans.